Consider the following 431-residue polypeptide: Na(+)-translocating NADH-quinone reductase subunit F (431 aa).

A helical membrane pass occupies residues 10–30 (IFVASAAFCSLGLILVAVILL). The 93-residue stretch at 41–133 (CKLKINNDDS…DLCLEVEERY (93 aa)) folds into the 2Fe-2S ferredoxin-type domain. [2Fe-2S] cluster is bound by residues cysteine 76, cysteine 82, cysteine 85, and cysteine 117. The FAD-binding FR-type domain maps to 136–286 (ASSWEGTVVS…SGPYGESFMK (151 aa)). Residues 289-413 (NRPVIFLIGG…ALHNSSILTL (125 aa)) are catalytic.

Belongs to the NqrF family. Composed of six subunits; NqrA, NqrB, NqrC, NqrD, NqrE and NqrF. [2Fe-2S] cluster is required as a cofactor. Requires FAD as cofactor.

The protein localises to the cell inner membrane. It catalyses the reaction a ubiquinone + n Na(+)(in) + NADH + H(+) = a ubiquinol + n Na(+)(out) + NAD(+). Its function is as follows. NQR complex catalyzes the reduction of ubiquinone-1 to ubiquinol by two successive reactions, coupled with the transport of Na(+) ions from the cytoplasm to the periplasm. The first step is catalyzed by NqrF, which accepts electrons from NADH and reduces ubiquinone-1 to ubisemiquinone by a one-electron transfer pathway. This Chlamydia trachomatis serovar D (strain ATCC VR-885 / DSM 19411 / UW-3/Cx) protein is Na(+)-translocating NADH-quinone reductase subunit F.